The following is a 148-amino-acid chain: Arginine repressor (148 aa).

This sequence belongs to the ArgR family.

The protein localises to the cytoplasm. The protein operates within amino-acid biosynthesis; L-arginine biosynthesis [regulation]. In terms of biological role, regulates arginine biosynthesis genes. The polypeptide is Arginine repressor (Chlorobium limicola (strain DSM 245 / NBRC 103803 / 6330)).